The primary structure comprises 230 residues: Urease accessory protein UreG (230 aa).

The tract at residues 1-31 (MPPHFLSADSTGQPHRHADRPKRVRTPGEPL) is disordered. The span at 14–25 (PHRHADRPKRVR) shows a compositional bias: basic residues. Residue 37–44 (GPVGSGKT) coordinates GTP.

This sequence belongs to the SIMIBI class G3E GTPase family. UreG subfamily. Homodimer. UreD, UreF and UreG form a complex that acts as a GTP-hydrolysis-dependent molecular chaperone, activating the urease apoprotein by helping to assemble the nickel containing metallocenter of UreC. The UreE protein probably delivers the nickel.

The protein resides in the cytoplasm. Functionally, facilitates the functional incorporation of the urease nickel metallocenter. This process requires GTP hydrolysis, probably effectuated by UreG. The sequence is that of Urease accessory protein UreG from Mycobacterium sp. (strain JLS).